The primary structure comprises 621 residues: 2-hydroxyacyl-CoA lyase 2 (621 aa).

A helical transmembrane segment spans residues 7–29 (LGCSLGAALGGVIFASYKLGLLY). Glutamate 87 provides a ligand contact to thiamine diphosphate. The interval 459–539 (DFVGSAAYIM…VIALVGNDAC (81 aa)) is thiamine pyrophosphate binding. 2 residues coordinate Mg(2+): aspartate 510 and asparagine 536.

This sequence belongs to the TPP enzyme family. Mg(2+) serves as cofactor. The cofactor is thiamine diphosphate.

It is found in the endoplasmic reticulum membrane. It catalyses the reaction 2-hydroxyoctadecanoyl-CoA = heptadecanal + formyl-CoA. The catalysed reaction is (2R)-hydroxyhexadecanoyl-CoA = pentadecanal + formyl-CoA. Its function is as follows. Endoplasmic reticulum 2-OH acyl-CoA lyase involved in the cleavage (C1 removal) reaction in the fatty acid alpha-oxydation in a thiamine pyrophosphate (TPP)-dependent manner. This Danio rerio (Zebrafish) protein is 2-hydroxyacyl-CoA lyase 2 (ilvbl).